A 420-amino-acid polypeptide reads, in one-letter code: Tyrosine--tRNA ligase (420 aa).

Y33 lines the L-tyrosine pocket. Residues 38-47 (PTGPSLHAGH) carry the 'HIGH' region motif. L-tyrosine contacts are provided by Y167 and Q171. Residues 227–231 (KFGKS) carry the 'KMSKS' region motif. K230 contacts ATP. The S4 RNA-binding domain maps to 352–418 (RTIIDLLVAS…GKKNFAGVQI (67 aa)).

It belongs to the class-I aminoacyl-tRNA synthetase family. TyrS type 1 subfamily. As to quaternary structure, homodimer.

The protein resides in the cytoplasm. The catalysed reaction is tRNA(Tyr) + L-tyrosine + ATP = L-tyrosyl-tRNA(Tyr) + AMP + diphosphate + H(+). Functionally, catalyzes the attachment of tyrosine to tRNA(Tyr) in a two-step reaction: tyrosine is first activated by ATP to form Tyr-AMP and then transferred to the acceptor end of tRNA(Tyr). This is Tyrosine--tRNA ligase from Corynebacterium glutamicum (strain ATCC 13032 / DSM 20300 / JCM 1318 / BCRC 11384 / CCUG 27702 / LMG 3730 / NBRC 12168 / NCIMB 10025 / NRRL B-2784 / 534).